Reading from the N-terminus, the 334-residue chain is Amino acid--[acyl-carrier-protein] ligase 2 (334 aa).

Residue C131 participates in Zn(2+) binding. Residues R159, E161, and 168–169 each bind ATP; that span reads RL. Zn(2+) is bound at residue E176. E176 contributes to the an L-alpha-amino acid binding site. Residues K235 and 250–253 each bind ATP; that span reads ACMS. Position 279 (C279) interacts with Zn(2+). Residue R286 participates in ATP binding.

Belongs to the class-II aminoacyl-tRNA synthetase family. Amino acid--[acyl-carrier-protein] ligase subfamily. In terms of assembly, homodimer. Zn(2+) serves as cofactor.

The catalysed reaction is an L-alpha-amino acid + holo-[ACP] + ATP = an L-alpha-aminoacyl-[ACP] + AMP + diphosphate. Catalyzes the ATP-dependent activation of L-glycine and its transfer to the phosphopantetheine prosthetic group covalently attached to the vicinal carrier protein blr6284 of yet unknown function. May participate in nonribosomal peptide synthesis or related processes. L-alanine is a poor substrate whereas L-serine or D-amino acids are not substrates for ATP-dependent activation. Does not display tRNA aminoacylation activity. The sequence is that of Amino acid--[acyl-carrier-protein] ligase 2 from Bradyrhizobium diazoefficiens (strain JCM 10833 / BCRC 13528 / IAM 13628 / NBRC 14792 / USDA 110).